The chain runs to 1108 residues: cGMP-inhibited 3',5'-cyclic phosphodiesterase 3B (1108 aa).

Basic and acidic residues predominate over residues 1–11 (MRKDERERDTP). The interval 1–32 (MRKDERERDTPAMRSPPPPPPPATATAASPPE) is disordered. The segment at 1–32 (MRKDERERDTPAMRSPPPPPPPATATAASPPE) is interaction with RAPGEF3. Positions 14–23 (RSPPPPPPPA) are enriched in pro residues. A Phosphoserine modification is found at Ser15. A run of 6 helical transmembrane segments spans residues 73 to 93 (AGAR…LLGA), 114 to 134 (LSLS…CFLT), 144 to 164 (AGSW…FAAW), 175 to 195 (AAAA…LTLA), 204 to 224 (VLVL…LGAL), and 231 to 251 (LLSC…DHFF). The residue at position 279 (Ser279) is a Phosphoserine; by PKB/AKT1 or PKB/AKT2. Phosphoserine is present on residues Ser280 and Ser427. The interval 405 to 448 (DRKLHKGLSSKPSFPTAQLRRSSGASGLLTSEHHSRWDRSGGKR) is disordered. The span at 414 to 433 (SKPSFPTAQLRRSSGASGLL) shows a compositional bias: polar residues. The tract at residues 421-445 (AQLRRSSGASGLLTSEHHSRWDRSG) is interaction with PIK3R6. Basic and acidic residues predominate over residues 435–445 (SEHHSRWDRSG). Residues 633 to 1070 (PNIDQEVLLD…KIWKEIIEEE (438 aa)) enclose the PDEase domain. His719 acts as the Proton donor in catalysis. Residue His719 participates in AMP binding. Residues His723, His803, Asp804, and Asp919 each coordinate Mg(2+). AMP contacts are provided by Asp804, Asp919, and Gln970. The segment covering 999–1033 (EEGDDTESDDDDDDDDDDDDDDDEELDSDDEETED) has biased composition (acidic residues). A disordered region spans residues 999-1042 (EEGDDTESDDDDDDDDDDDDDDDEELDSDDEETEDNLNPKPQRR).

The protein belongs to the cyclic nucleotide phosphodiesterase family. PDE3 subfamily. As to quaternary structure, homodimer. Interacts with PIK3CG; regulates PDE3B activity and thereby cAMP levels in cells. Interacts with RAPGEF3 and PIK3R6; form a signaling complex that regulates phosphatidylinositol 3-kinase gamma in angiogenesis. Interacts with ABHD15; this interaction regulates PDE3B's stability and expression and, thereby, impacts the antilipolytic action of insulin. The cofactor is Mg(2+). Requires Mn(2+) as cofactor. Phosphorylation at Ser-279 mediates insulin-induced activation of PDE3B. In terms of tissue distribution, abundant in adipose tissues.

The protein localises to the membrane. It catalyses the reaction a nucleoside 3',5'-cyclic phosphate + H2O = a nucleoside 5'-phosphate + H(+). It carries out the reaction 3',5'-cyclic AMP + H2O = AMP + H(+). The enzyme catalyses 3',5'-cyclic GMP + H2O = GMP + H(+). With respect to regulation, inhibited by cGMP. Functionally, cyclic nucleotide phosphodiesterase with a dual-specificity for the second messengers cAMP and cGMP, which are key regulators of many important physiological processes. Regulates angiogenesis by inhibiting the cAMP-dependent guanine nucleotide exchange factor RAPGEF3 and downstream phosphatidylinositol 3-kinase gamma-mediated signaling. Controls cardiac contractility by reducing cAMP concentration in cardiocytes. This Rattus norvegicus (Rat) protein is cGMP-inhibited 3',5'-cyclic phosphodiesterase 3B.